We begin with the raw amino-acid sequence, 255 residues long: Small ribosomal subunit protein uS2 (255 aa).

This sequence belongs to the universal ribosomal protein uS2 family.

The protein is Small ribosomal subunit protein uS2 of Streptococcus uberis (strain ATCC BAA-854 / 0140J).